Here is a 276-residue protein sequence, read N- to C-terminus: Large ribosomal subunit protein uL2 (276 aa).

2 disordered regions span residues 35–58 and 218–276; these read RKLSKTGGRNSYGRMTSRHRGGGH and RPIT…KNRK. A compositionally biased stretch (basic residues) spans 255-276; sequence RRPKKASNKMIVRRRPNGKNRK.

The protein belongs to the universal ribosomal protein uL2 family. Part of the 50S ribosomal subunit. Forms a bridge to the 30S subunit in the 70S ribosome.

Functionally, one of the primary rRNA binding proteins. Required for association of the 30S and 50S subunits to form the 70S ribosome, for tRNA binding and peptide bond formation. It has been suggested to have peptidyltransferase activity; this is somewhat controversial. Makes several contacts with the 16S rRNA in the 70S ribosome. This chain is Large ribosomal subunit protein uL2, found in Bifidobacterium adolescentis (strain ATCC 15703 / DSM 20083 / NCTC 11814 / E194a).